Here is a 691-residue protein sequence, read N- to C-terminus: Elongation factor G (691 aa).

The tr-type G domain maps to 8–282 (EKTRNIGIMA…AVVDYLPSPV (275 aa)). Residues 17–24 (AHIDAGKT), 81–85 (DTPGH), and 135–138 (NKMD) contribute to the GTP site.

The protein belongs to the TRAFAC class translation factor GTPase superfamily. Classic translation factor GTPase family. EF-G/EF-2 subfamily.

It is found in the cytoplasm. Its function is as follows. Catalyzes the GTP-dependent ribosomal translocation step during translation elongation. During this step, the ribosome changes from the pre-translocational (PRE) to the post-translocational (POST) state as the newly formed A-site-bound peptidyl-tRNA and P-site-bound deacylated tRNA move to the P and E sites, respectively. Catalyzes the coordinated movement of the two tRNA molecules, the mRNA and conformational changes in the ribosome. In Caldicellulosiruptor bescii (strain ATCC BAA-1888 / DSM 6725 / KCTC 15123 / Z-1320) (Anaerocellum thermophilum), this protein is Elongation factor G.